A 162-amino-acid chain; its full sequence is Interleukin-15 (162 aa).

An N-terminal signal peptide occupies residues Met1–Ala29. Positions Gly30–Ala48 are excised as a propeptide. Cystine bridges form between Cys83-Cys133 and Cys90-Cys136. 3 N-linked (GlcNAc...) asparagine glycosylation sites follow: Asn104, Asn108, and Asn119.

This sequence belongs to the IL-15/IL-21 family.

It localises to the secreted. Functionally, cytokine that plays a major role in the development of inflammatory and protective immune responses to microbial invaders and parasites by modulating immune cells of both the innate and adaptive immune systems. Stimulates the proliferation and activation of natural killer cells, T-cells and B-cells and promotes the secretion of several cytokines. In monocytes, induces the production of IL8 and monocyte chemotactic protein 1/CCL2, two chemokines that attract neutrophils and monocytes respectively to sites of infection. Unlike most cytokines, which are secreted in soluble form, IL15 is expressed in association with its high affinity IL15RA on the surface of IL15-producing cells and delivers signals to target cells that express IL2RB and IL2RG receptor subunits. Binding to its receptor triggers the phosphorylation of JAK1 and JAK3 and the recruitment and subsequent phosphorylation of signal transducer and activator of transcription-3/STAT3 and STAT5. In mast cells, induces the rapid tyrosine phosphorylation of STAT6 and thereby controls mast cell survival and release of cytokines such as IL4. The sequence is that of Interleukin-15 (Il15) from Mus musculus (Mouse).